The sequence spans 567 residues: Glutamine-dependent NAD(+) synthetase (567 aa).

The 241-residue stretch at 2–242 folds into the CN hydrolase domain; sequence LNLTLAQLNF…EDILTVTLDL (241 aa). Residue Glu-41 is the Proton acceptor; for glutaminase activity of the active site. Catalysis depends on Lys-109, which acts as the For glutaminase activity. Residue Tyr-115 coordinates L-glutamine. Cys-145 functions as the Nucleophile; for glutaminase activity in the catalytic mechanism. Residues Ser-172 and Lys-178 each contribute to the L-glutamine site. The segment at 287–567 is ligase; sequence PKEEEEIYAA…RMPVTNKFFK (281 aa). 316 to 323 contributes to the ATP binding site; sequence GLSGGIDS. Asn-399 serves as a coordination point for deamido-NAD(+). Thr-423 is an ATP binding site. Residues Glu-428 and Lys-538 each contribute to the deamido-NAD(+) site.

It in the C-terminal section; belongs to the NAD synthetase family.

It carries out the reaction deamido-NAD(+) + L-glutamine + ATP + H2O = L-glutamate + AMP + diphosphate + NAD(+) + H(+). The protein operates within cofactor biosynthesis; NAD(+) biosynthesis; NAD(+) from deamido-NAD(+) (L-Gln route): step 1/1. Catalyzes the ATP-dependent amidation of deamido-NAD to form NAD. Uses L-glutamine as a nitrogen source. The chain is Glutamine-dependent NAD(+) synthetase from Aquifex aeolicus (strain VF5).